A 401-amino-acid polypeptide reads, in one-letter code: Dual-specificity RNA methyltransferase RlmN (401 aa).

Residue Glu114 is the Proton acceptor of the active site. A Radical SAM core domain is found at 120–365; the sequence is DKGRGTLCVS…TMVRRTRGDD (246 aa). Cys127 and Cys370 form a disulfide bridge. Residues Cys134, Cys138, and Cys141 each coordinate [4Fe-4S] cluster. Residues 187–188, Ser219, 241–243, and Asn327 each bind S-adenosyl-L-methionine; these read GE and SLH. Cys370 functions as the S-methylcysteine intermediate in the catalytic mechanism.

It belongs to the radical SAM superfamily. RlmN family. [4Fe-4S] cluster is required as a cofactor.

It is found in the cytoplasm. It catalyses the reaction adenosine(2503) in 23S rRNA + 2 reduced [2Fe-2S]-[ferredoxin] + 2 S-adenosyl-L-methionine = 2-methyladenosine(2503) in 23S rRNA + 5'-deoxyadenosine + L-methionine + 2 oxidized [2Fe-2S]-[ferredoxin] + S-adenosyl-L-homocysteine. It carries out the reaction adenosine(37) in tRNA + 2 reduced [2Fe-2S]-[ferredoxin] + 2 S-adenosyl-L-methionine = 2-methyladenosine(37) in tRNA + 5'-deoxyadenosine + L-methionine + 2 oxidized [2Fe-2S]-[ferredoxin] + S-adenosyl-L-homocysteine. Its function is as follows. Specifically methylates position 2 of adenine 2503 in 23S rRNA and position 2 of adenine 37 in tRNAs. m2A2503 modification seems to play a crucial role in the proofreading step occurring at the peptidyl transferase center and thus would serve to optimize ribosomal fidelity. This Xanthomonas campestris pv. campestris (strain 8004) protein is Dual-specificity RNA methyltransferase RlmN.